Consider the following 91-residue polypeptide: Protein xpaR7 (91 aa).

This chain is Protein xpaR7 (xpaR7), found in Bacillus licheniformis.